Here is a 142-residue protein sequence, read N- to C-terminus: Large ribosomal subunit protein uL13 (142 aa).

It belongs to the universal ribosomal protein uL13 family. In terms of assembly, part of the 50S ribosomal subunit.

In terms of biological role, this protein is one of the early assembly proteins of the 50S ribosomal subunit, although it is not seen to bind rRNA by itself. It is important during the early stages of 50S assembly. In Aliivibrio salmonicida (strain LFI1238) (Vibrio salmonicida (strain LFI1238)), this protein is Large ribosomal subunit protein uL13.